We begin with the raw amino-acid sequence, 204 residues long: Large ribosomal subunit protein uL4 (204 aa).

Residues 44-76 are disordered; sequence RAGTHRTKGMGEISGTTKKPYRQKGTGSARQGS.

This sequence belongs to the universal ribosomal protein uL4 family. In terms of assembly, part of the 50S ribosomal subunit.

Functionally, one of the primary rRNA binding proteins, this protein initially binds near the 5'-end of the 23S rRNA. It is important during the early stages of 50S assembly. It makes multiple contacts with different domains of the 23S rRNA in the assembled 50S subunit and ribosome. Forms part of the polypeptide exit tunnel. This chain is Large ribosomal subunit protein uL4, found in Gluconobacter oxydans (strain 621H) (Gluconobacter suboxydans).